The chain runs to 191 residues: Orotate phosphoribosyltransferase (191 aa).

114–122 (EDVVTTGKS) serves as a coordination point for 5-phospho-alpha-D-ribose 1-diphosphate. Orotate-binding residues include Thr-118 and Arg-146.

Belongs to the purine/pyrimidine phosphoribosyltransferase family. PyrE subfamily. As to quaternary structure, homodimer. The cofactor is Mg(2+).

The catalysed reaction is orotidine 5'-phosphate + diphosphate = orotate + 5-phospho-alpha-D-ribose 1-diphosphate. It participates in pyrimidine metabolism; UMP biosynthesis via de novo pathway; UMP from orotate: step 1/2. Its function is as follows. Catalyzes the transfer of a ribosyl phosphate group from 5-phosphoribose 1-diphosphate to orotate, leading to the formation of orotidine monophosphate (OMP). This chain is Orotate phosphoribosyltransferase, found in Clostridium botulinum (strain Loch Maree / Type A3).